Here is a 128-residue protein sequence, read N- to C-terminus: Large ribosomal subunit protein bL17 (128 aa).

The protein belongs to the bacterial ribosomal protein bL17 family. In terms of assembly, part of the 50S ribosomal subunit. Contacts protein L32.

This chain is Large ribosomal subunit protein bL17, found in Petrotoga mobilis (strain DSM 10674 / SJ95).